The sequence spans 194 residues: 5'-deoxynucleotidase PBPRA2627 (194 aa).

Substrate-binding positions include 18–19 and H33; that span reads RW. The region spanning 30-142 is the HD domain; that stretch reads ISEHSLQVAF…VKQADSLCAY (113 aa). A divalent metal cation contacts are provided by H33, H68, and D69. Substrate is bound by residues D69, 77-80, and D137; that span reads DMPT. D137 contacts a divalent metal cation.

This sequence belongs to the 5DNU family. Homodimer. A divalent metal cation is required as a cofactor.

Its subcellular location is the cytoplasm. It catalyses the reaction a 2'-deoxyribonucleoside 5'-phosphate + H2O = a 2'-deoxyribonucleoside + phosphate. Its function is as follows. Catalyzes the strictly specific dephosphorylation of 2'-deoxyribonucleoside 5'-monophosphates. The sequence is that of 5'-deoxynucleotidase PBPRA2627 from Photobacterium profundum (strain SS9).